A 299-amino-acid polypeptide reads, in one-letter code: uncharacterized protein (299 aa).

This is an uncharacterized protein from Escherichia coli (strain K12).